The following is a 277-amino-acid chain: Bis(5'-nucleosyl)-tetraphosphatase, symmetrical (277 aa).

The protein belongs to the Ap4A hydrolase family.

The catalysed reaction is P(1),P(4)-bis(5'-adenosyl) tetraphosphate + H2O = 2 ADP + 2 H(+). Its function is as follows. Hydrolyzes diadenosine 5',5'''-P1,P4-tetraphosphate to yield ADP. The sequence is that of Bis(5'-nucleosyl)-tetraphosphatase, symmetrical from Bordetella pertussis (strain Tohama I / ATCC BAA-589 / NCTC 13251).